The primary structure comprises 74 residues: uncharacterized protein (74 aa).

The helical transmembrane segment at 52–72 threads the bilayer; that stretch reads ITFGFTVLGLGIGMIFGDAGL.

It localises to the membrane. This is an uncharacterized protein from Methanocaldococcus jannaschii (strain ATCC 43067 / DSM 2661 / JAL-1 / JCM 10045 / NBRC 100440) (Methanococcus jannaschii).